A 295-amino-acid chain; its full sequence is Aspartate carbamoyltransferase catalytic subunit (295 aa).

Carbamoyl phosphate is bound by residues Arg49 and Thr50. Lys77 is an L-aspartate binding site. Arg99, His127, and Gln130 together coordinate carbamoyl phosphate. Residues Arg161 and Arg212 each contribute to the L-aspartate site. Positions 251 and 252 each coordinate carbamoyl phosphate.

The protein belongs to the aspartate/ornithine carbamoyltransferase superfamily. ATCase family. As to quaternary structure, heterododecamer (2C3:3R2) of six catalytic PyrB chains organized as two trimers (C3), and six regulatory PyrI chains organized as three dimers (R2).

It carries out the reaction carbamoyl phosphate + L-aspartate = N-carbamoyl-L-aspartate + phosphate + H(+). It functions in the pathway pyrimidine metabolism; UMP biosynthesis via de novo pathway; (S)-dihydroorotate from bicarbonate: step 2/3. Its function is as follows. Catalyzes the condensation of carbamoyl phosphate and aspartate to form carbamoyl aspartate and inorganic phosphate, the committed step in the de novo pyrimidine nucleotide biosynthesis pathway. In Campylobacter jejuni (strain RM1221), this protein is Aspartate carbamoyltransferase catalytic subunit.